Here is a 308-residue protein sequence, read N- to C-terminus: Methionyl-tRNA formyltransferase (308 aa).

A (6S)-5,6,7,8-tetrahydrofolate-binding site is contributed by 107 to 110; that stretch reads SLLP.

Belongs to the Fmt family.

It catalyses the reaction L-methionyl-tRNA(fMet) + (6R)-10-formyltetrahydrofolate = N-formyl-L-methionyl-tRNA(fMet) + (6S)-5,6,7,8-tetrahydrofolate + H(+). Functionally, attaches a formyl group to the free amino group of methionyl-tRNA(fMet). The formyl group appears to play a dual role in the initiator identity of N-formylmethionyl-tRNA by promoting its recognition by IF2 and preventing the misappropriation of this tRNA by the elongation apparatus. The protein is Methionyl-tRNA formyltransferase of Carboxydothermus hydrogenoformans (strain ATCC BAA-161 / DSM 6008 / Z-2901).